We begin with the raw amino-acid sequence, 272 residues long: Ribosome maturation factor RimP (272 aa).

The interval Q209–D272 is disordered. Positions N250–I266 are enriched in basic and acidic residues.

The protein belongs to the RimP family.

The protein localises to the cytoplasm. Functionally, required for maturation of 30S ribosomal subunits. The sequence is that of Ribosome maturation factor RimP from Rhodopseudomonas palustris (strain BisA53).